The sequence spans 120 residues: UPF0231 protein YE0706 (120 aa).

This sequence belongs to the UPF0231 family.

The polypeptide is UPF0231 protein YE0706 (Yersinia enterocolitica serotype O:8 / biotype 1B (strain NCTC 13174 / 8081)).